The sequence spans 136 residues: SPbeta prophage-derived uncharacterized protein YonI (136 aa).

This Bacillus subtilis (strain 168) protein is SPbeta prophage-derived uncharacterized protein YonI (yonI).